The following is a 337-amino-acid chain: Protein-glutamate methylesterase/protein-glutamine glutaminase of group 3 operon (337 aa).

In terms of domain architecture, Response regulatory spans 2-119 (KIAIVNDMPL…GDAREAAAPL (118 aa)). The residue at position 53 (D53) is a 4-aspartylphosphate. Residues 144–337 (PLREASQRRG…AGRLTEFFAK (194 aa)) enclose the CheB-type methylesterase domain. Active-site residues include S160, H187, and D280.

The protein belongs to the CheB family. In terms of processing, phosphorylated by CheA. Phosphorylation of the N-terminal regulatory domain activates the methylesterase activity.

Its subcellular location is the cytoplasm. It catalyses the reaction [protein]-L-glutamate 5-O-methyl ester + H2O = L-glutamyl-[protein] + methanol + H(+). It carries out the reaction L-glutaminyl-[protein] + H2O = L-glutamyl-[protein] + NH4(+). Its function is as follows. Involved in chemotaxis. Part of a chemotaxis signal transduction system that modulates chemotaxis in response to various stimuli. Catalyzes the demethylation of specific methylglutamate residues introduced into the chemoreceptors (methyl-accepting chemotaxis proteins or MCP) by CheR. Also mediates the irreversible deamidation of specific glutamine residues to glutamic acid. The protein is Protein-glutamate methylesterase/protein-glutamine glutaminase of group 3 operon of Pseudomonas putida (strain ATCC 47054 / DSM 6125 / CFBP 8728 / NCIMB 11950 / KT2440).